Here is a 234-residue protein sequence, read N- to C-terminus: ATP-dependent dethiobiotin synthetase BioD (234 aa).

12-17 (GAGKTI) contacts ATP. T16 serves as a coordination point for Mg(2+). K39 is a catalytic residue. T43 contributes to the substrate binding site. Residues D47, 108–111 (EGLG), 168–169 (SC), and 200–202 (PYL) contribute to the ATP site. Residues D47 and E108 each coordinate Mg(2+).

Belongs to the dethiobiotin synthetase family. As to quaternary structure, homodimer. It depends on Mg(2+) as a cofactor.

Its subcellular location is the cytoplasm. It carries out the reaction (7R,8S)-7,8-diammoniononanoate + CO2 + ATP = (4R,5S)-dethiobiotin + ADP + phosphate + 3 H(+). The enzyme catalyses (7R,8S)-8-amino-7-(carboxyamino)nonanoate + ATP = (4R,5S)-dethiobiotin + ADP + phosphate + H(+). The protein operates within cofactor biosynthesis; biotin biosynthesis; biotin from 7,8-diaminononanoate: step 1/2. Functionally, catalyzes a mechanistically unusual reaction, the ATP-dependent insertion of CO2 between the N7 and N8 nitrogen atoms of 7,8-diaminopelargonic acid (DAPA, also called 7,8-diammoniononanoate) to form a ureido ring. This cyanobacterium does not encode bioA (which catalyzes the formation of the precursor for this reaction in the cannonical pathway), instead it encodes bioU, which replaces bioA and also performs the first half of the cannonical BioD reaction. Thus in this organism BioD has a different substrate. The polypeptide is ATP-dependent dethiobiotin synthetase BioD (Rippkaea orientalis (strain PCC 8801 / RF-1) (Cyanothece sp. (strain PCC 8801))).